Here is a 189-residue protein sequence, read N- to C-terminus: Holliday junction branch migration complex subunit RuvA (189 aa).

A domain I region spans residues 1–63 (MIHALNGKVE…DDGISLYGFL (63 aa)). Residues 64 to 135 (EVIKLKLFEK…ELKDTIKELD (72 aa)) form a domain II region. Positions 135–139 (DVSIN) are flexible linker. Residues 140–189 (EKDRKVLEAIEALVTLGFNRNQAKKAVNKVAAKDDKLDDIIKKALRFLSR) are domain III.

Belongs to the RuvA family. In terms of assembly, homotetramer. Forms an RuvA(8)-RuvB(12)-Holliday junction (HJ) complex. HJ DNA is sandwiched between 2 RuvA tetramers; dsDNA enters through RuvA and exits via RuvB. An RuvB hexamer assembles on each DNA strand where it exits the tetramer. Each RuvB hexamer is contacted by two RuvA subunits (via domain III) on 2 adjacent RuvB subunits; this complex drives branch migration. In the full resolvosome a probable DNA-RuvA(4)-RuvB(12)-RuvC(2) complex forms which resolves the HJ.

The protein localises to the cytoplasm. Its function is as follows. The RuvA-RuvB-RuvC complex processes Holliday junction (HJ) DNA during genetic recombination and DNA repair, while the RuvA-RuvB complex plays an important role in the rescue of blocked DNA replication forks via replication fork reversal (RFR). RuvA specifically binds to HJ cruciform DNA, conferring on it an open structure. The RuvB hexamer acts as an ATP-dependent pump, pulling dsDNA into and through the RuvAB complex. HJ branch migration allows RuvC to scan DNA until it finds its consensus sequence, where it cleaves and resolves the cruciform DNA. This is Holliday junction branch migration complex subunit RuvA from Thermosipho africanus (strain TCF52B).